We begin with the raw amino-acid sequence, 216 residues long: Ion-translocating oxidoreductase complex subunit G (216 aa).

Residues 14–34 (ALVLGSFGFLAASFVSIIYVI) form a helical membrane-spanning segment. Position 181 is an FMN phosphoryl threonine (T181).

Belongs to the RnfG family. The complex is composed of six subunits: RnfA, RnfB, RnfC, RnfD, RnfE and RnfG. Requires FMN as cofactor.

The protein resides in the cell inner membrane. Part of a membrane-bound complex that couples electron transfer with translocation of ions across the membrane. This chain is Ion-translocating oxidoreductase complex subunit G, found in Buchnera aphidicola subsp. Baizongia pistaciae (strain Bp).